The chain runs to 591 residues: Aspartate--tRNA ligase (591 aa).

An L-aspartate-binding site is contributed by Glu172. Positions 196 to 199 (QLFK) are aspartate. Arg218 is a binding site for L-aspartate. Residues 218–220 (RDE) and Gln227 each bind ATP. His449 contributes to the L-aspartate binding site. Glu483 serves as a coordination point for ATP. Arg490 is an L-aspartate binding site. 535–538 (GLDR) lines the ATP pocket.

The protein belongs to the class-II aminoacyl-tRNA synthetase family. Type 1 subfamily. In terms of assembly, homodimer.

It localises to the cytoplasm. The enzyme catalyses tRNA(Asp) + L-aspartate + ATP = L-aspartyl-tRNA(Asp) + AMP + diphosphate. Its function is as follows. Catalyzes the attachment of L-aspartate to tRNA(Asp) in a two-step reaction: L-aspartate is first activated by ATP to form Asp-AMP and then transferred to the acceptor end of tRNA(Asp). The protein is Aspartate--tRNA ligase of Actinobacillus pleuropneumoniae serotype 7 (strain AP76).